Reading from the N-terminus, the 361-residue chain is Diacylglycerol O-acyltransferase 2 (361 aa).

At 1-42 the chain is on the cytoplasmic side; it reads MKTIIAAYSGVLRGTGSSLLSAVHDLPNIPWLSKSSVVRHLQ. A helical transmembrane segment spans residues 43–61; sequence IISVLQWVLSFLILGVACT. Residues 62–65 lie on the Lumenal side of the membrane; that stretch reads AVLV. A helical transmembrane segment spans residues 66-85; sequence YIFCTDLWLIAALYLTWMVL. Residues 86-361 lie on the Cytoplasmic side of the membrane; the sequence is DWNTPYKGGR…LHDSEMLEIV (276 aa).

Belongs to the diacylglycerol acyltransferase family.

It localises to the endoplasmic reticulum membrane. It is found in the lipid droplet. The protein localises to the cytoplasm. The protein resides in the perinuclear region. It catalyses the reaction an acyl-CoA + a 1,2-diacyl-sn-glycerol = a triacyl-sn-glycerol + CoA. The enzyme catalyses all-trans-retinol + an acyl-CoA = an all-trans-retinyl ester + CoA. It carries out the reaction 2-(9Z-octadecenoyl)-glycerol + (9Z)-octadecenoyl-CoA = 1,2-di-(9Z-octadecenoyl)-sn-glycerol + CoA. The catalysed reaction is 1,2-di-(9Z-octadecenoyl)-sn-glycerol + (9Z)-octadecenoyl-CoA = 1,2,3-tri-(9Z-octadecenoyl)-glycerol + CoA. It catalyses the reaction all-trans-retinol + hexadecanoyl-CoA = all-trans-retinyl hexadecanoate + CoA. The enzyme catalyses 1-O-(9Z-octadecenyl)-glycerol + (9Z)-octadecenoyl-CoA = 1-O-(9Z-octadecyl)-3-(9Z-octadecenoyl)-glycerol + CoA. It carries out the reaction 1-(9Z-octadecenoyl)-glycerol + (9Z)-octadecenoyl-CoA = 1,2-di-(9Z-octadecenoyl)-glycerol + CoA. The catalysed reaction is 1,2-di-(9Z-octadecenoyl)-sn-glycerol + hexadecanoyl-CoA = 1,2-di-(9Z)-octadecenoyl-3-hexadecanoyl-sn-glycerol + CoA. It catalyses the reaction 1,3-di-(9Z-octadecenoyl)-glycerol + (9Z)-octadecenoyl-CoA = 1,2,3-tri-(9Z-octadecenoyl)-glycerol + CoA. The enzyme catalyses 2,3-di-(9Z)-octadecenoyl-sn-glycerol + (9Z)-octadecenoyl-CoA = 1,2,3-tri-(9Z-octadecenoyl)-glycerol + CoA. It carries out the reaction 2-(9Z-octadecenoyl)-glycerol + hexadecanoyl-CoA = 1-hexadecanoyl-2-(9Z-octadecenoyl)-sn-glycerol + CoA. It functions in the pathway glycerolipid metabolism; triacylglycerol biosynthesis. Its function is as follows. Essential acyltransferase that catalyzes the terminal and only committed step in triacylglycerol synthesis by using diacylglycerol and fatty acyl CoA as substrates. Required for synthesis and storage of intracellular triglycerides. Probably plays a central role in cytosolic lipid accumulation. This is Diacylglycerol O-acyltransferase 2 (dgat2) from Xenopus tropicalis (Western clawed frog).